A 311-amino-acid chain; its full sequence is Malate dehydrogenase (311 aa).

NAD(+) is bound by residues 7-13 (GAAGGIG) and aspartate 34. Arginine 81 and arginine 87 together coordinate substrate. Residues asparagine 94 and 117–119 (ITN) each bind NAD(+). Residues asparagine 119 and arginine 153 each contribute to the substrate site. Histidine 177 functions as the Proton acceptor in the catalytic mechanism. Residue methionine 227 coordinates NAD(+).

This sequence belongs to the LDH/MDH superfamily. MDH type 1 family. Homodimer.

It catalyses the reaction (S)-malate + NAD(+) = oxaloacetate + NADH + H(+). Its function is as follows. Catalyzes the reversible oxidation of malate to oxaloacetate. The sequence is that of Malate dehydrogenase from Vibrio parahaemolyticus serotype O3:K6 (strain RIMD 2210633).